We begin with the raw amino-acid sequence, 359 residues long: Putative transposase y4uE (359 aa).

2 disordered regions span residues 1–31 and 318–359; these read MGDG…APGG and HYAH…EEAA.

Belongs to the transposase 9 family.

The polypeptide is Putative transposase y4uE (Sinorhizobium fredii (strain NBRC 101917 / NGR234)).